Reading from the N-terminus, the 217-residue chain is Trichothecene biosynthesis transcription regulator TRI6 (217 aa).

The C2H2-type zinc finger occupies valine 185–histidine 215.

The protein localises to the nucleus. Its function is as follows. Transcriptional activator of part of the core trichothecene biosynthesis cluster. The protein is Trichothecene biosynthesis transcription regulator TRI6 of Fusarium sporotrichioides.